The primary structure comprises 454 residues: Bifunctional protein GlmU (454 aa).

The interval 1–226 is pyrophosphorylase; it reads MALNVVILAA…AVEVEGANNR (226 aa). Residues 8 to 11, lysine 22, glutamine 73, 78 to 79, 100 to 102, glycine 137, glutamate 151, asparagine 166, and asparagine 224 each bind UDP-N-acetyl-alpha-D-glucosamine; these read LAAG, GT, and YGD. Aspartate 102 is a Mg(2+) binding site. Position 224 (asparagine 224) interacts with Mg(2+). Positions 227–247 are linker; the sequence is VQLAQLERAYQARAAEKLMLE. The segment at 248–454 is N-acetyltransferase; sequence GANLRDPARI…GWARPVKKAK (207 aa). UDP-N-acetyl-alpha-D-glucosamine contacts are provided by arginine 330 and lysine 348. The active-site Proton acceptor is histidine 360. 2 residues coordinate UDP-N-acetyl-alpha-D-glucosamine: tyrosine 363 and asparagine 374. Residues alanine 377, 383–384, serine 402, alanine 420, and arginine 437 each bind acetyl-CoA; that span reads NY.

In the N-terminal section; belongs to the N-acetylglucosamine-1-phosphate uridyltransferase family. It in the C-terminal section; belongs to the transferase hexapeptide repeat family. As to quaternary structure, homotrimer. Mg(2+) serves as cofactor.

Its subcellular location is the cytoplasm. It catalyses the reaction alpha-D-glucosamine 1-phosphate + acetyl-CoA = N-acetyl-alpha-D-glucosamine 1-phosphate + CoA + H(+). The enzyme catalyses N-acetyl-alpha-D-glucosamine 1-phosphate + UTP + H(+) = UDP-N-acetyl-alpha-D-glucosamine + diphosphate. It participates in nucleotide-sugar biosynthesis; UDP-N-acetyl-alpha-D-glucosamine biosynthesis; N-acetyl-alpha-D-glucosamine 1-phosphate from alpha-D-glucosamine 6-phosphate (route II): step 2/2. The protein operates within nucleotide-sugar biosynthesis; UDP-N-acetyl-alpha-D-glucosamine biosynthesis; UDP-N-acetyl-alpha-D-glucosamine from N-acetyl-alpha-D-glucosamine 1-phosphate: step 1/1. Its pathway is bacterial outer membrane biogenesis; LPS lipid A biosynthesis. Its function is as follows. Catalyzes the last two sequential reactions in the de novo biosynthetic pathway for UDP-N-acetylglucosamine (UDP-GlcNAc). The C-terminal domain catalyzes the transfer of acetyl group from acetyl coenzyme A to glucosamine-1-phosphate (GlcN-1-P) to produce N-acetylglucosamine-1-phosphate (GlcNAc-1-P), which is converted into UDP-GlcNAc by the transfer of uridine 5-monophosphate (from uridine 5-triphosphate), a reaction catalyzed by the N-terminal domain. The sequence is that of Bifunctional protein GlmU from Shewanella piezotolerans (strain WP3 / JCM 13877).